Consider the following 295-residue polypeptide: Protein LplC (295 aa).

The next 6 helical transmembrane spans lie at 21 to 41, 81 to 101, 116 to 136, 142 to 162, 199 to 219, and 260 to 280; these read ILFL…IIAG, VSIF…FTMA, LNLV…YLVV, LDTY…LIII, VIAT…FHAL, and GIKL…YPFL. An ABC transmembrane type-1 domain is found at 79–280; sequence MGVSIFITVV…LPILAVYPFL (202 aa).

This sequence belongs to the binding-protein-dependent transport system permease family. CysTW subfamily.

It is found in the cell membrane. This Bacillus subtilis (strain 168) protein is Protein LplC (lplC).